The primary structure comprises 658 residues: Probable mitochondrial Rho GTPase gemA (658 aa).

Residues 1-633 lie on the Cytoplasmic side of the membrane; it reads MKNNIKVILI…NGSNGSNNSN (633 aa). Residues 2–175 form the Miro 1 domain; it reads KNNIKVILIG…LYASQTSVFF (174 aa). GTP contacts are provided by residues 11-18, 57-62, and 118-121; these read GDEQVGKS, DTFDDG, and NKLD. EF-hand domains are found at residues 191–226 and 311–346; these read GCERALKRIFKLCDHDNDGSLSEEEINYFQTKCGHE and MGNEFFKSLFEKYDSDSDGVLSSFDLVSLFSTTPKI. Asp204, Asp206, Asp208, Ser210, Glu215, Asp324, Asp326, Asp328, and Asp335 together coordinate Ca(2+). The Miro 2 domain occupies 420–616; the sequence is RNIVNCYVFG…YHEMMETIVN (197 aa). GTP-binding positions include 429–436, 466–468, and 530–533; these read GAEAVGKT, LLK, and TKNN. The disordered stretch occupies residues 532 to 575; the sequence is NNNNNNNNNNNNNNNNNNNNLNNNNNNINNNNNNNNNNTTTTNA. Residues 634-656 traverse the membrane as a helical; Anchor for type IV membrane protein segment; the sequence is ILTYLVIAAGVAGVGLLLSKYLA. The Mitochondrial intermembrane segment spans residues 657 to 658; that stretch reads KK.

The protein belongs to the mitochondrial Rho GTPase family.

It is found in the mitochondrion outer membrane. Its function is as follows. Mitochondrial GTPase involved in mitochondrial trafficking. Probably involved in control of anterograde transport of mitochondria and their subcellular distribution. The polypeptide is Probable mitochondrial Rho GTPase gemA (gemA) (Dictyostelium discoideum (Social amoeba)).